A 512-amino-acid chain; its full sequence is Mesoderm induction early response protein 1 (512 aa).

Residues M1 to T16 are compositionally biased toward low complexity. Disordered regions lie at residues M1–D63 and Y75–I173. S10 is modified (phosphoserine). Residues S17 to E36 are compositionally biased toward basic and acidic residues. Acidic residues-rich tracts occupy residues R37–E46 and E83–D105. The segment covering Q129–A144 has biased composition (polar residues). S141 bears the Phosphoserine mark. Y155 is modified (phosphotyrosine). Residues S160 and S166 each carry the phosphoserine modification. Over residues S160 to I173 the composition is skewed to acidic residues. The ELM2 domain occupies K180–V278. Residues K180–E284 are interaction with HDAC1. K239 is covalently cross-linked (Glycyl lysine isopeptide (Lys-Gly) (interchain with G-Cter in SUMO2)). One can recognise an SANT domain in the interval E283–R335. The disordered stretch occupies residues E366–D512. Phosphoserine is present on residues S367, S369, and S377. Residues T396–G409 show a composition bias toward polar residues. Residues L414 to G423 show a composition bias toward basic and acidic residues. K420 is covalently cross-linked (Glycyl lysine isopeptide (Lys-Gly) (interchain with G-Cter in SUMO2)). Residue T448 is modified to Phosphothreonine. Positions A462–P475 are enriched in basic and acidic residues. A compositionally biased stretch (polar residues) spans N482–F494. Phosphoserine is present on residues S483, S488, and S491.

In terms of assembly, interacts with HDAC1. Part of a complex containing at least CDYL, MIER1, MIER2, HDAC1 and HDAC2. As to expression, ubiquitously expressed, but at very low levels. However, consistent level of expression are observed in heart, testis, thyroid, ovary and adrenal gland. Transcripts are up-regulated in breast carcinoma cell lines and tumor.

The protein resides in the nucleus. It is found in the cytoplasm. Transcriptional repressor regulating the expression of a number of genes including SP1 target genes. Probably functions through recruitment of HDAC1 a histone deacetylase involved in chromatin silencing. This chain is Mesoderm induction early response protein 1 (MIER1), found in Homo sapiens (Human).